A 361-amino-acid polypeptide reads, in one-letter code: DNA replication and repair protein RecF (361 aa).

30–37 (GPNGSGKT) lines the ATP pocket.

The protein belongs to the RecF family.

The protein localises to the cytoplasm. Its function is as follows. The RecF protein is involved in DNA metabolism; it is required for DNA replication and normal SOS inducibility. RecF binds preferentially to single-stranded, linear DNA. It also seems to bind ATP. This is DNA replication and repair protein RecF from Erwinia tasmaniensis (strain DSM 17950 / CFBP 7177 / CIP 109463 / NCPPB 4357 / Et1/99).